The chain runs to 265 residues: Hydroxyethylthiazole kinase 2 (265 aa).

Residue M39 participates in substrate binding. K115 and T168 together coordinate ATP. G195 serves as a coordination point for substrate.

Belongs to the Thz kinase family. Requires Mg(2+) as cofactor.

It carries out the reaction 5-(2-hydroxyethyl)-4-methylthiazole + ATP = 4-methyl-5-(2-phosphooxyethyl)-thiazole + ADP + H(+). It participates in cofactor biosynthesis; thiamine diphosphate biosynthesis; 4-methyl-5-(2-phosphoethyl)-thiazole from 5-(2-hydroxyethyl)-4-methylthiazole: step 1/1. Its function is as follows. Catalyzes the phosphorylation of the hydroxyl group of 4-methyl-5-beta-hydroxyethylthiazole (THZ). The protein is Hydroxyethylthiazole kinase 2 of Clostridium botulinum (strain Langeland / NCTC 10281 / Type F).